The primary structure comprises 173 residues: SKP1-like protein 1 (173 aa).

Residues 115-173 are interaction with the F-box domain of F-box proteins; it reads ILAANYLNIKGLLDLTCQTVADMIKGKTPEEIRKTFNIKNDFTPEEEEEIRRENQWAFE.

Belongs to the SKP1 family. In terms of assembly, part of a SCF (SKP1-CUL1-F-box protein) E3 ubiquitin-protein ligase complex. Interacts directly with MOF (via F-box domain). Interacts with rice black streaked dwarf virus RBSDV protein P7-2. Is able to form the SCF complex together with CUL1 and the viral P7-2 protein. Interacts with D3.

The protein localises to the nucleus. It participates in protein modification; protein ubiquitination. Involved in ubiquitination and subsequent proteasomal degradation of target proteins. Together with CUL1, a RING-box and a F-box protein, it forms a SCF E3 ubiquitin ligase complex. The functional specificity of this complex depends on the type of F-box protein. In the SCF complex, it serves as an adapter that links the F-box protein to CUL1. In Oryza sativa subsp. japonica (Rice), this protein is SKP1-like protein 1.